The primary structure comprises 252 residues: 5-oxoprolinase subunit A (252 aa).

This sequence belongs to the LamB/PxpA family. Forms a complex composed of PxpA, PxpB and PxpC.

It catalyses the reaction 5-oxo-L-proline + ATP + 2 H2O = L-glutamate + ADP + phosphate + H(+). Functionally, catalyzes the cleavage of 5-oxoproline to form L-glutamate coupled to the hydrolysis of ATP to ADP and inorganic phosphate. This chain is 5-oxoprolinase subunit A, found in Staphylococcus saprophyticus subsp. saprophyticus (strain ATCC 15305 / DSM 20229 / NCIMB 8711 / NCTC 7292 / S-41).